Reading from the N-terminus, the 84-residue chain is Large ribosomal subunit protein uL23 (84 aa).

This sequence belongs to the universal ribosomal protein uL23 family. In terms of assembly, part of the 50S ribosomal subunit. Contacts protein L29.

Its function is as follows. Binds to 23S rRNA. One of the proteins that surrounds the polypeptide exit tunnel on the outside of the ribosome. This Thermoplasma acidophilum (strain ATCC 25905 / DSM 1728 / JCM 9062 / NBRC 15155 / AMRC-C165) protein is Large ribosomal subunit protein uL23.